Consider the following 414-residue polypeptide: tRNA N6-adenosine threonylcarbamoyltransferase, mitochondrial (414 aa).

The transit peptide at 1–29 directs the protein to the mitochondrion; the sequence is MLMLRRTAGAIPKPPKSKVYGFLRRFSVH. K74 and K140 each carry N6-acetyllysine. H147 and H151 together coordinate a divalent metal cation. Substrate contacts are provided by residues 169-173 and D202; that span reads LISGG. K203 carries the post-translational modification N6-acetyllysine. Positions 222 and 226 each coordinate substrate. 2 positions are modified to N6-acetyllysine: K230 and K299. Substrate contacts are provided by residues 329 to 330 and T357; that span reads SN. D358 is a binding site for a divalent metal cation.

The protein belongs to the KAE1 / TsaD family. In terms of assembly, monomer. The cofactor is a divalent metal cation.

Its subcellular location is the mitochondrion. The enzyme catalyses L-threonylcarbamoyladenylate + adenosine(37) in tRNA = N(6)-L-threonylcarbamoyladenosine(37) in tRNA + AMP + H(+). In terms of biological role, required for the formation of a threonylcarbamoyl group on adenosine at position 37 (t(6)A37) in mitochondrial tRNAs that read codons beginning with adenine. Probably involved in the transfer of the threonylcarbamoyl moiety of threonylcarbamoyl-AMP (TC-AMP) to the N6 group of A37. Involved in mitochondrial genome maintenance. This Mus musculus (Mouse) protein is tRNA N6-adenosine threonylcarbamoyltransferase, mitochondrial.